Reading from the N-terminus, the 106-residue chain is Putative cytochrome c oxidase subunit 7A3, mitochondrial (106 aa).

Residues M1–H23 constitute a mitochondrion transit peptide.

The protein belongs to the cytochrome c oxidase VIIa family.

The protein localises to the mitochondrion inner membrane. In Homo sapiens (Human), this protein is Putative cytochrome c oxidase subunit 7A3, mitochondrial (COX7A2P2).